The primary structure comprises 521 residues: 2,3-bisphosphoglycerate-independent phosphoglycerate mutase (521 aa).

2 residues coordinate Mn(2+): D18 and S68. S68 acts as the Phosphoserine intermediate in catalysis. Substrate contacts are provided by residues H129, 158-159 (RD), R190, R196, 266-269 (RSDR), and K343. Residues D410, H414, D451, H452, and H470 each contribute to the Mn(2+) site.

Belongs to the BPG-independent phosphoglycerate mutase family. Monomer. Requires Mn(2+) as cofactor.

The enzyme catalyses (2R)-2-phosphoglycerate = (2R)-3-phosphoglycerate. It participates in carbohydrate degradation; glycolysis; pyruvate from D-glyceraldehyde 3-phosphate: step 3/5. Catalyzes the interconversion of 2-phosphoglycerate and 3-phosphoglycerate. The polypeptide is 2,3-bisphosphoglycerate-independent phosphoglycerate mutase (Hydrogenovibrio crunogenus (strain DSM 25203 / XCL-2) (Thiomicrospira crunogena)).